The following is a 567-amino-acid chain: DNA ligase B (567 aa).

Lys132 functions as the N6-AMP-lysine intermediate in the catalytic mechanism.

It belongs to the NAD-dependent DNA ligase family. LigB subfamily.

It catalyses the reaction NAD(+) + (deoxyribonucleotide)n-3'-hydroxyl + 5'-phospho-(deoxyribonucleotide)m = (deoxyribonucleotide)n+m + AMP + beta-nicotinamide D-nucleotide.. Its function is as follows. Catalyzes the formation of phosphodiester linkages between 5'-phosphoryl and 3'-hydroxyl groups in double-stranded DNA using NAD as a coenzyme and as the energy source for the reaction. This chain is DNA ligase B, found in Yersinia pestis.